Consider the following 447-residue polypeptide: MTAHEVNFDGLVGLTHHYAGLSFGNEASTRHRFQMSNPRLAVKQGLLKMKALADAGFPQAVIPPHERPFIPALRQLGFTGSDEQILDKVARQAPRWLSSVSSASPMWVANAATVCPSADALDGKVHLTVANLNNKFHRALEAPVTEALLRAIFRDESQFSVHSALPQVALLGDEGAANHNRLGGEYGSAGVQLFVYGREEENEIRPARYPARQSREASEAVARLNQVNPQQVIFAQQNPEVIDQGVFHNDVIAVSNRQVLFCHEAAFARQKVLINQLRTRVDGFMAIEVPAGEVSVSDAVATYLFNSQLLSRDDGSMLLVLPRECQDHVGVWRYLNKLVAEDNPISAMQVFDLRESMANGGGPACLRLRVVLTEEERRAVNPAVMMNDALFTALNAWADRYYRDRLTAADLADPLLLREGREALDVLTRLLDLGSVYPFQQTGAADG.

Substrate-binding positions include alanine 19–serine 28, asparagine 110, and histidine 137–arginine 138. Glutamate 174 is a catalytic residue. Substrate is bound at residue arginine 212. Histidine 248 is a catalytic residue. The substrate site is built by aspartate 250 and asparagine 359. Cysteine 365 serves as the catalytic Nucleophile.

It belongs to the succinylarginine dihydrolase family. In terms of assembly, homodimer.

It carries out the reaction N(2)-succinyl-L-arginine + 2 H2O + 2 H(+) = N(2)-succinyl-L-ornithine + 2 NH4(+) + CO2. Its pathway is amino-acid degradation; L-arginine degradation via AST pathway; L-glutamate and succinate from L-arginine: step 2/5. Its function is as follows. Catalyzes the hydrolysis of N(2)-succinylarginine into N(2)-succinylornithine, ammonia and CO(2). The protein is N-succinylarginine dihydrolase of Salmonella dublin (strain CT_02021853).